A 241-amino-acid polypeptide reads, in one-letter code: Phosphoadenosine 5'-phosphosulfate reductase (241 aa).

Positions 221–241 (GADPRSGRWRGKAKTECGLHA) are disordered. The Nucleophile; cysteine thiosulfonate intermediate role is filled by C237.

It belongs to the PAPS reductase family. CysH subfamily.

The protein localises to the cytoplasm. The catalysed reaction is [thioredoxin]-disulfide + sulfite + adenosine 3',5'-bisphosphate + 2 H(+) = [thioredoxin]-dithiol + 3'-phosphoadenylyl sulfate. It functions in the pathway sulfur metabolism; hydrogen sulfide biosynthesis; sulfite from sulfate: step 3/3. In terms of biological role, catalyzes the formation of sulfite from phosphoadenosine 5'-phosphosulfate (PAPS) using thioredoxin as an electron donor. The protein is Phosphoadenosine 5'-phosphosulfate reductase of Gloeobacter violaceus (strain ATCC 29082 / PCC 7421).